Reading from the N-terminus, the 251-residue chain is Triosephosphate isomerase (251 aa).

9–11 is a substrate binding site; the sequence is NWK. Residue H95 is the Electrophile of the active site. The active-site Proton acceptor is the E167. Substrate-binding positions include G173, S213, and 234–235; that span reads GG. S213 is subject to Phosphoserine.

This sequence belongs to the triosephosphate isomerase family. Homodimer.

The protein resides in the cytoplasm. The enzyme catalyses D-glyceraldehyde 3-phosphate = dihydroxyacetone phosphate. It functions in the pathway carbohydrate biosynthesis; gluconeogenesis. It participates in carbohydrate degradation; glycolysis; D-glyceraldehyde 3-phosphate from glycerone phosphate: step 1/1. Involved in the gluconeogenesis. Catalyzes stereospecifically the conversion of dihydroxyacetone phosphate (DHAP) to D-glyceraldehyde-3-phosphate (G3P). The polypeptide is Triosephosphate isomerase (Bacillus anthracis).